The chain runs to 198 residues: Adenine phosphoribosyltransferase (198 aa).

Belongs to the purine/pyrimidine phosphoribosyltransferase family. Homodimer.

It is found in the cytoplasm. The enzyme catalyses AMP + diphosphate = 5-phospho-alpha-D-ribose 1-diphosphate + adenine. The protein operates within purine metabolism; AMP biosynthesis via salvage pathway; AMP from adenine: step 1/1. In terms of biological role, catalyzes a salvage reaction resulting in the formation of AMP, that is energically less costly than de novo synthesis. This Serratia proteamaculans (strain 568) protein is Adenine phosphoribosyltransferase.